The sequence spans 370 residues: Putative phosphoserine aminotransferase (370 aa).

The segment at 1 to 22 (MAELTIPADLKPRDGRFGSGPS) is disordered. Residue arginine 44 participates in L-glutamate binding. Residues phenylalanine 102, threonine 148, aspartate 170, and glutamine 193 each coordinate pyridoxal 5'-phosphate. Lysine 194 bears the N6-(pyridoxal phosphate)lysine mark. Position 245–246 (245–246 (NT)) interacts with pyridoxal 5'-phosphate.

This sequence belongs to the class-V pyridoxal-phosphate-dependent aminotransferase family. SerC subfamily. In terms of assembly, homodimer. Pyridoxal 5'-phosphate is required as a cofactor.

The protein resides in the cytoplasm. It catalyses the reaction O-phospho-L-serine + 2-oxoglutarate = 3-phosphooxypyruvate + L-glutamate. It carries out the reaction 4-(phosphooxy)-L-threonine + 2-oxoglutarate = (R)-3-hydroxy-2-oxo-4-phosphooxybutanoate + L-glutamate. The protein operates within amino-acid biosynthesis; L-serine biosynthesis; L-serine from 3-phospho-D-glycerate: step 2/3. It participates in cofactor biosynthesis; pyridoxine 5'-phosphate biosynthesis; pyridoxine 5'-phosphate from D-erythrose 4-phosphate: step 3/5. Functionally, catalyzes the reversible conversion of 3-phosphohydroxypyruvate to phosphoserine and of 3-hydroxy-2-oxo-4-phosphonooxybutanoate to phosphohydroxythreonine. This chain is Putative phosphoserine aminotransferase, found in Mycobacterium sp. (strain JLS).